A 287-amino-acid polypeptide reads, in one-letter code: CTD small phosphatase-like protein 3 (287 aa).

Residues 60–219 (RSTPEYTLVL…LKLCSFLEAI (160 aa)) enclose the FCP1 homology domain.

This sequence belongs to the CTDSPL2 family.

Its function is as follows. Probable phosphatase. The protein is CTD small phosphatase-like protein 3 (scpl-3) of Caenorhabditis elegans.